The chain runs to 377 residues: Protein RecA (377 aa).

65 to 72 (GPESSGKT) serves as a coordination point for ATP. A disordered region spans residues 329–377 (GDEEAAATKATETKTDAPKDKDKGKTKAKDKPADVTPGQIELAPDKSAK). Over residues 339–361 (TETKTDAPKDKDKGKTKAKDKPA) the composition is skewed to basic and acidic residues.

The protein belongs to the RecA family.

Its subcellular location is the cytoplasm. In terms of biological role, can catalyze the hydrolysis of ATP in the presence of single-stranded DNA, the ATP-dependent uptake of single-stranded DNA by duplex DNA, and the ATP-dependent hybridization of homologous single-stranded DNAs. It interacts with LexA causing its activation and leading to its autocatalytic cleavage. The polypeptide is Protein RecA (Levilactobacillus brevis (strain ATCC 367 / BCRC 12310 / CIP 105137 / JCM 1170 / LMG 11437 / NCIMB 947 / NCTC 947) (Lactobacillus brevis)).